The following is a 188-amino-acid chain: Elongation factor P-like protein (188 aa).

The protein belongs to the elongation factor P family.

This chain is Elongation factor P-like protein, found in Xylella fastidiosa (strain M12).